Consider the following 334-residue polypeptide: Hematopoietic SH2 domain-containing protein (334 aa).

Residues 34–125 (WFHGTISREA…PFGELLTQAC (92 aa)) enclose the SH2 domain. Disordered regions lie at residues 157 to 181 (EVQRSSCPPEEASERKPSTTTKGEF) and 254 to 280 (EDSCAATTSLQNPAEPQALRGREATFR). Residues 258-267 (AATTSLQNPA) are compositionally biased toward polar residues.

As to quaternary structure, interacts with FES and TNK2. Post-translationally, may be phosphorylated by FES and ACK1. As to expression, predominantly expressed in spleen and thymus. Appears not to be expressed in heart, brain, liver, kidney, embryo, lung and ovary.

It localises to the cytoplasm. The protein localises to the mitochondrion. In terms of biological role, adapter protein involved in tyrosine kinase and CD28 signaling. May be a modulator of the apoptotic response through its ability to affect mitochondrial stability. In Mus musculus (Mouse), this protein is Hematopoietic SH2 domain-containing protein (Hsh2d).